The chain runs to 20 residues: Poneritoxin (20 aa).

Met-18 is subject to Methionine sulfoxide; in form U1-PONTX-Dq3c. Lys-19 bears the Lysine amide; in form U1-PONTX-Dq3a and U1-PONTX-Dq3c mark.

The peptide spanning residues 2 to 19 occurs in 3 forms and has been given 3 different names. U1-PONTX-Dq3a has an amidated Lys-19, U1-PONTX-Dq3c has an amidated Lys-19 and an oxidized Met-18, and U1-PONTX-Dq3b has no modifications at either Met-18 or Lys-19. As to expression, expressed by the venom gland.

The protein localises to the secreted. In terms of biological role, may have antimicrobial properties, like most ant linear peptides. The sequence is that of Poneritoxin from Dinoponera quadriceps (South American ant).